A 263-amino-acid polypeptide reads, in one-letter code: Histidine racemase (263 aa).

C67 serves as the catalytic Proton acceptor. C209 (proton donor) is an active-site residue.

The protein belongs to the histidine racemase family. In terms of assembly, homodimer.

It carries out the reaction L-histidine = D-histidine. Functionally, cofactor-independent isomerase that catalyzes the reversible conversion of L-histidine to D-histidine. May play a role in growth of F.nucleatum. The sequence is that of Histidine racemase from Fusobacterium nucleatum subsp. nucleatum (strain ATCC 23726 / VPI 4351).